A 237-amino-acid chain; its full sequence is Ras-related protein Rab-33A (237 aa).

Positions 46, 47, 48, 49, 50, 51, 65, and 68 each coordinate GTP. Thr-50 contributes to the Mg(2+) binding site. A Switch 1 motif is present at residues 59 to 71; the sequence is GTFPDKTEATIGV. Thr-68 and Asp-91 together coordinate Mg(2+). The Switch 2 signature appears at 92-111; it reads TAGQERFRKSMVEHYYRNVH. Positions 94, 151, 152, 154, 182, and 183 each coordinate GTP. 2 S-geranylgeranyl cysteine lipidation sites follow: Cys-235 and Cys-237. Cys-237 is subject to Cysteine methyl ester.

This sequence belongs to the small GTPase superfamily. Rab family. As to quaternary structure, interacts with ATG16L1; the interaction is important for autophagosome formation. Mg(2+) is required as a cofactor. As to expression, expressed predominantly in brain. Weak expression in ovary.

The protein resides in the cell membrane. It carries out the reaction GTP + H2O = GDP + phosphate + H(+). Its activity is regulated as follows. Regulated by guanine nucleotide exchange factors (GEFs) which promote the exchange of bound GDP for free GTP. Regulated by GTPase activating proteins (GAPs) which increase the GTP hydrolysis activity. Inhibited by GDP dissociation inhibitors (GDIs). The small GTPases Rab are key regulators of intracellular membrane trafficking, from the formation of transport vesicles to their fusion with membranes. Rabs cycle between an inactive GDP-bound form and an active GTP-bound form that is able to recruit to membranes different sets of downstream effectors directly responsible for vesicle formation, movement, tethering and fusion. Modulates autophagosome formation through interaction with ATG16L1. This chain is Ras-related protein Rab-33A, found in Mus musculus (Mouse).